The following is a 130-amino-acid chain: Small ribosomal subunit protein uS9 (130 aa).

Belongs to the universal ribosomal protein uS9 family.

This Desulfosudis oleivorans (strain DSM 6200 / JCM 39069 / Hxd3) (Desulfococcus oleovorans) protein is Small ribosomal subunit protein uS9.